Here is a 115-residue protein sequence, read N- to C-terminus: Large ribosomal subunit protein bL20 (115 aa).

It belongs to the bacterial ribosomal protein bL20 family.

Its function is as follows. Binds directly to 23S ribosomal RNA and is necessary for the in vitro assembly process of the 50S ribosomal subunit. It is not involved in the protein synthesizing functions of that subunit. In Chlorobium phaeobacteroides (strain DSM 266 / SMG 266 / 2430), this protein is Large ribosomal subunit protein bL20.